The primary structure comprises 206 residues: Urease accessory protein UreE (206 aa).

The tract at residues 136 to 206 is disordered; sequence PEGGAYAEPS…HGHAHAHDRK (71 aa). Composition is skewed to basic and acidic residues over residues 148-169 and 177-191; these read QGHDEHDHHHGHDHHHDHGGHE and HGHAHDDHVHDEHCG. Residues 192-206 are compositionally biased toward basic residues; sequence HGHHHHGHAHAHDRK.

Belongs to the UreE family.

The protein localises to the cytoplasm. In terms of biological role, involved in urease metallocenter assembly. Binds nickel. Probably functions as a nickel donor during metallocenter assembly. The polypeptide is Urease accessory protein UreE (Bradyrhizobium sp. (strain BTAi1 / ATCC BAA-1182)).